Consider the following 503-residue polypeptide: Aromatase 2 (503 aa).

Residue cysteine 437 participates in heme binding.

Belongs to the cytochrome P450 family. Heme is required as a cofactor.

It localises to the membrane. It catalyses the reaction testosterone + 3 reduced [NADPH--hemoprotein reductase] + 3 O2 = 17beta-estradiol + formate + 3 oxidized [NADPH--hemoprotein reductase] + 4 H2O + 4 H(+). The enzyme catalyses androst-4-ene-3,17-dione + 3 reduced [NADPH--hemoprotein reductase] + 3 O2 = estrone + formate + 3 oxidized [NADPH--hemoprotein reductase] + 4 H2O + 4 H(+). In terms of biological role, catalyzes the formation of aromatic C18 estrogens from C19 androgens. The sequence is that of Aromatase 2 (CYP19A2) from Sus scrofa (Pig).